Here is a 559-residue protein sequence, read N- to C-terminus: Formate--tetrahydrofolate ligase (559 aa).

68-75 (TPAGEGKS) is a binding site for ATP.

This sequence belongs to the formate--tetrahydrofolate ligase family.

The enzyme catalyses (6S)-5,6,7,8-tetrahydrofolate + formate + ATP = (6R)-10-formyltetrahydrofolate + ADP + phosphate. Its pathway is one-carbon metabolism; tetrahydrofolate interconversion. In Lactobacillus gasseri (strain ATCC 33323 / DSM 20243 / BCRC 14619 / CIP 102991 / JCM 1131 / KCTC 3163 / NCIMB 11718 / NCTC 13722 / AM63), this protein is Formate--tetrahydrofolate ligase.